The primary structure comprises 541 residues: Formimidoyltransferase-cyclodeaminase (541 aa).

Positions 1–181 are formiminotransferase N-subdomain; it reads MSQLVECVPN…GATVTGARKF (181 aa). His-82 functions as the For formimidoyltransferase activity in the catalytic mechanism. 163-172 contacts folate; that stretch reads GPSSFVPSWG. Positions 182-326 are formiminotransferase C-subdomain; the sequence is LIAFNINLLS…PKERIIEYLV (145 aa). The linker stretch occupies residues 327 to 334; that stretch reads PDSGPEQS. The segment at 335 to 541 is cyclodeaminase/cyclohydrolase; the sequence is LLDASLRAFV…VLGSLEARKE (207 aa). Asp-412 serves as the catalytic For cyclodeaminase activity. Ser-520 is modified (phosphoserine).

In the C-terminal section; belongs to the cyclodeaminase/cyclohydrolase family. This sequence in the N-terminal section; belongs to the formiminotransferase family. Homooctamer, including four polyglutamate binding sites. The subunits are arranged as a tetramer of dimers, and form a planar ring-shaped structure. Specifically expressed in liver (at protein level).

The protein resides in the cytoplasm. Its subcellular location is the cytosol. It localises to the golgi apparatus. It is found in the cytoskeleton. The protein localises to the microtubule organizing center. The protein resides in the centrosome. Its subcellular location is the centriole. It carries out the reaction 5-formimidoyltetrahydrofolate + L-glutamate = N-formimidoyl-L-glutamate + (6S)-5,6,7,8-tetrahydrofolate. The enzyme catalyses 5-formimidoyltetrahydrofolate + 2 H(+) = (6R)-5,10-methenyltetrahydrofolate + NH4(+). The protein operates within amino-acid degradation; L-histidine degradation into L-glutamate; L-glutamate from N-formimidoyl-L-glutamate (transferase route): step 1/1. Its function is as follows. Folate-dependent enzyme, that displays both transferase and deaminase activity. Serves to channel one-carbon units from formiminoglutamate to the folate pool. In terms of biological role, binds and promotes bundling of vimentin filaments originating from the Golgi. The sequence is that of Formimidoyltransferase-cyclodeaminase (Ftcd) from Rattus norvegicus (Rat).